The sequence spans 1944 residues: Anaphase-promoting complex subunit 1 (1944 aa).

Residues Ser51 and Ser60 each carry the phosphoserine modification. Residue Thr291 is modified to Phosphothreonine. Residues 312 to 343 (ESPVASPFQNYSSIHSQSRSTSSPSLHSRSPS) form a disordered region. Phosphoserine is present on residues Ser313, Ser341, Ser343, Ser355, Ser362, Ser373, and Ser377. The span at 323–343 (SSIHSQSRSTSSPSLHSRSPS) shows a compositional bias: low complexity. Positions 370-395 (NLSSHSQSPKRHSISHSPSGSFNDSF) are disordered. Residues 384-393 (SHSPSGSFND) are compositionally biased toward polar residues. Thr537 carries the phosphothreonine modification. Residues Ser547 and Ser555 each carry the phosphoserine modification. Phosphotyrosine is present on Tyr571. 3 positions are modified to phosphoserine: Ser680, Ser686, and Ser688. The disordered stretch occupies residues 991-1014 (NLPRGKSVLSSEVSSGTEAEEEDD). Residues 998–1007 (VLSSEVSSGT) show a composition bias toward polar residues. PC repeat units lie at residues 1297-1325 (AAGLALGMVCLGHGSNLIGMSDLNVPEQL), 1366-1404 (GATLALAMIYLKTNNRSIADWLRAPDTMYLLDFVKPEFL), 1467-1501 (GACLSLGFRFAGSENLSAFSCLHKFAKDFMNYLSA), and 1520-1552 (LLSLAMVMAGSGNLKVLQLCRFLHMKTGGEMNY).

It belongs to the APC1 family. The mammalian APC/C is composed at least of 14 distinct subunits ANAPC1, ANAPC2, CDC27/APC3, ANAPC4, ANAPC5, CDC16/APC6, ANAPC7, CDC23/APC8, ANAPC10, ANAPC11, CDC26/APC12, ANAPC13, ANAPC15 and ANAPC16 that assemble into a complex of at least 19 chains with a combined molecular mass of around 1.2 MDa; APC/C interacts with FZR1 and FBXO5. Phosphorylated. Phosphorylation on Ser-355 occurs specifically during mitosis. As to expression, abundantly expressed in proliferating fibroblasts, juvenile testis, adult brain and epididymis.

It functions in the pathway protein modification; protein ubiquitination. Component of the anaphase promoting complex/cyclosome (APC/C), a cell cycle-regulated E3 ubiquitin ligase that controls progression through mitosis and the G1 phase of the cell cycle. The APC/C complex acts by mediating ubiquitination and subsequent degradation of target proteins: it mainly mediates the formation of 'Lys-11'-linked polyubiquitin chains and, to a lower extent, the formation of 'Lys-48'- and 'Lys-63'-linked polyubiquitin chains. The APC/C complex catalyzes assembly of branched 'Lys-11'-/'Lys-48'-linked branched ubiquitin chains on target proteins. This Mus musculus (Mouse) protein is Anaphase-promoting complex subunit 1 (Anapc1).